Reading from the N-terminus, the 191-residue chain is UPF0149 protein plu3602 (191 aa).

It belongs to the UPF0149 family.

This Photorhabdus laumondii subsp. laumondii (strain DSM 15139 / CIP 105565 / TT01) (Photorhabdus luminescens subsp. laumondii) protein is UPF0149 protein plu3602.